The primary structure comprises 556 residues: Oxygen-dependent choline dehydrogenase (556 aa).

4 to 33 (DYIIIGAGSAGNVLATRLTEDPNTTVLLLE) lines the FAD pocket. His-473 serves as the catalytic Proton acceptor.

This sequence belongs to the GMC oxidoreductase family. Requires FAD as cofactor.

It localises to the cell membrane. The enzyme catalyses choline + A = betaine aldehyde + AH2. The catalysed reaction is betaine aldehyde + NAD(+) + H2O = glycine betaine + NADH + 2 H(+). It functions in the pathway amine and polyamine biosynthesis; betaine biosynthesis via choline pathway; betaine aldehyde from choline (cytochrome c reductase route): step 1/1. Its function is as follows. Involved in the biosynthesis of the osmoprotectant glycine betaine. Catalyzes the oxidation of choline to betaine aldehyde and betaine aldehyde to glycine betaine at the same rate. The protein is Oxygen-dependent choline dehydrogenase of Escherichia coli O6:H1 (strain CFT073 / ATCC 700928 / UPEC).